A 758-amino-acid polypeptide reads, in one-letter code: Ribosomal RNA processing protein 1 homolog B (758 aa).

Phosphoserine is present on S245. Positions 259–272 (AVSKKKTALGKNHS) are enriched in basic residues. The segment at 259–285 (AVSKKKTALGKNHSRKDGLSDERGRDD) is disordered. Positions 273–285 (RKDGLSDERGRDD) are enriched in basic and acidic residues. A phosphoserine mark is found at S350, S392, S394, and S395. A disordered region spans residues 381–598 (GSRVFCVEEE…KTASLKKRKK (218 aa)). The span at 397–408 (QKRRRKKKKKHH) shows a compositional bias: basic residues. A compositionally biased stretch (low complexity) spans 447–457 (GAEATSSTGEE). Phosphoserine occurs at positions 452 and 458. Residues 469-481 (HNKRKRPRKKSPR) are compositionally biased toward basic residues. Residues 498-513 (SQSGPSGSHPQGPRGS) are compositionally biased toward low complexity. S513 is subject to Phosphoserine. Basic residues predominate over residues 566–575 (QRRRLQKKKA). S579 carries the phosphoserine modification. Position 652 is an N6-acetyllysine (K652). The segment at 660–681 (KSSTATHPPGPAVQLNKTPSSS) is disordered. Residues S702 and S706 each carry the phosphoserine modification. The tract at residues 707–758 (PTGPSRVAFDPEQKPLHGVLKTPTSSPASSPLVAKKPLTTTPRRRPRAMDFF) is disordered. At R712 the chain carries Citrulline. At T728 the chain carries Phosphothreonine. S732, S735, and S736 each carry phosphoserine.

It belongs to the RRP1 family. Interacts with the transcriptional activator E2F1. Interacts with serine/threonine-protein phosphatase PP1 subunits PPP1CB and PPP1CC but not with PPP1CA. Interacts with 60S ribosomal proteins RPL5 and RPL27, ribosomal processing protein RRP1/NNP1 and other nucleolar proteins including NOP2/NOL1 and FBL. Also interacts with nucleolar protein NPM1/B23. Interacts with splicing factor SRSF1 and with LUC7L3/CROP. Interacts with GTPase activator SIPA1. Interacts with CBX5/HP1alpha, H1-10, NCL, PARP1, TRIM28 and YBX3. As to quaternary structure, (Microbial infection) Interacts with influenza A virus nucleoprotein NP and with RNA-directed RNA polymerase subunits PB1 and PB2. In terms of processing, citrullinated by PADI4.

It localises to the nucleus. Its subcellular location is the nucleolus. The protein resides in the nucleoplasm. It is found in the chromosome. In terms of biological role, positively regulates DNA damage-induced apoptosis by acting as a transcriptional coactivator of proapoptotic target genes of the transcriptional activator E2F1. Likely to play a role in ribosome biogenesis by targeting serine/threonine protein phosphatase PP1 to the nucleolus. Involved in regulation of mRNA splicing. Inhibits SIPA1 GTPase activity. Involved in regulating expression of extracellular matrix genes. Associates with chromatin and may play a role in modulating chromatin structure. (Microbial infection) Following influenza A virus (IAV) infection, promotes viral mRNA transcription by facilitating the binding of IAV RNA-directed RNA polymerase to capped mRNA. The sequence is that of Ribosomal RNA processing protein 1 homolog B (RRP1B) from Homo sapiens (Human).